A 161-amino-acid chain; its full sequence is S-protein homolog 2 (161 aa).

Residues 1–24 (MDIPKQYLSLFILIIFITTKLSQA) form the signal peptide. N-linked (GlcNAc...) asparagine glycans are attached at residues asparagine 75, asparagine 106, and asparagine 157.

Belongs to the plant self-incompatibility (S1) protein family.

Its subcellular location is the secreted. This chain is S-protein homolog 2, found in Arabidopsis thaliana (Mouse-ear cress).